The following is a 207-amino-acid chain: NADH-quinone oxidoreductase subunit C (207 aa).

The protein belongs to the complex I 30 kDa subunit family. As to quaternary structure, NDH-1 is composed of 14 different subunits. Subunits NuoB, C, D, E, F, and G constitute the peripheral sector of the complex.

The protein resides in the cell inner membrane. It catalyses the reaction a quinone + NADH + 5 H(+)(in) = a quinol + NAD(+) + 4 H(+)(out). Its function is as follows. NDH-1 shuttles electrons from NADH, via FMN and iron-sulfur (Fe-S) centers, to quinones in the respiratory chain. The immediate electron acceptor for the enzyme in this species is believed to be ubiquinone. Couples the redox reaction to proton translocation (for every two electrons transferred, four hydrogen ions are translocated across the cytoplasmic membrane), and thus conserves the redox energy in a proton gradient. This chain is NADH-quinone oxidoreductase subunit C, found in Rickettsia felis (strain ATCC VR-1525 / URRWXCal2) (Rickettsia azadi).